Here is a 2148-residue protein sequence, read N- to C-terminus: Polyketide synthase 1 (2148 aa).

Residues 19-261 are N-terminal acylcarrier protein transacylase domain (SAT); sequence FIFGDQSSCN…TPLAVHAPYH (243 aa). The Ketosynthase family 3 (KS3) domain occupies 394 to 829; sequence DSKIAIIGMS…GGNTALLVED (436 aa). Active-site for beta-ketoacyl synthase activity residues include Cys566, His701, and His745. A malonyl-CoA:ACP transacylase (MAT) domain region spans residues 929-1233; it reads AFVFSGQGSQ…PSLMRNKDGW (305 aa). Catalysis depends on Ser1018, which acts as the For acyl/malonyl transferase activity. The segment at 1310–1624 is product template (PT) domain; the sequence is TASVHRIVHE…RKVLNTAMPP (315 aa). The tract at residues 1314-1447 is N-terminal hotdog fold; that stretch reads HRIVHESVDK…SSLHFEQPKV (134 aa). The 306-residue stretch at 1314–1619 folds into the PKS/mFAS DH domain; the sequence is HRIVHESVDK…FQGIPRKVLN (306 aa). His1346 acts as the Proton acceptor; for dehydratase activity in catalysis. Positions 1474-1619 are C-terminal hotdog fold; that stretch reads LNSRMSSGVI…FQGIPRKVLN (146 aa). Asp1533 acts as the Proton donor; for dehydratase activity in catalysis. Residues 1619–1655 form a disordered region; sequence NTAMPPPKSQNEAQVHSSPAKSRPKPPGSASSVHSGR. Over residues 1627-1638 the composition is skewed to polar residues; that stretch reads SQNEAQVHSSPA. One can recognise a Carrier 1 domain in the interval 1678 to 1752; sequence RDPMQALFKI…DLATHLGFDT (75 aa). Residue Ser1712 is modified to O-(pantetheine 4'-phosphoryl)serine. The segment covering 1756–1769 has biased composition (low complexity); the sequence is DQSSGQSSSCGGLS. Residues 1756–1796 form a disordered region; that stretch reads DQSSGQSSSCGGLSPRSDSTGEITSNATTPPSLSPRGSVSG. Polar residues predominate over residues 1771–1796; it reads RSDSTGEITSNATTPPSLSPRGSVSG. Positions 1793–1870 constitute a Carrier 2 domain; the sequence is SVSGSQCKDV…SFKHMFQQGH (78 aa). The residue at position 1830 (Ser1830) is an O-(pantetheine 4'-phosphoryl)serine. Positions 1882-2146 are thioesterase (TE) domain; sequence LKQYRATSTL…ERVAAFIRST (265 aa). Ser1973 functions as the For thioesterase activity in the catalytic mechanism.

Polyketide synthase; part of the Pks1 gene cluster that mediates the biosynthesis of an anthraquinone derivative pigment that contributes to conidial pigmentation that provides protection from UV radiation, heat and cold stress. The polyketide synthase Pks1 produces 1-acetyl-2,4,6,8-tetrahydroxy-9,10-anthraquinone though condensation of acetyl-CoA with malonyl-CoA. The dehydratase EthD and the laccase Mlac1 further convert the anthraquinone derivative into the final conidial pigment. The protein is Polyketide synthase 1 of Metarhizium acridum (strain CQMa 102).